The following is a 542-amino-acid chain: 3-(3-hydroxy-phenyl)propionate/3-hydroxycinnamic acid hydroxylase (542 aa).

FAD contacts are provided by residues 10-39 (SVAI…VVER) and 278-288 (FVAGRVALIGD).

Belongs to the PheA/TfdB FAD monooxygenase family. FAD serves as cofactor.

It carries out the reaction 3-(3-hydroxyphenyl)propanoate + NADH + O2 + H(+) = 3-(2,3-dihydroxyphenyl)propanoate + NAD(+) + H2O. It catalyses the reaction (2E)-3-(3-hydroxyphenyl)prop-2-enoate + NADH + O2 + H(+) = (2E)-3-(2,3-dihydroxyphenyl)prop-2-enoate + NAD(+) + H2O. Its pathway is aromatic compound metabolism; 3-phenylpropanoate degradation. Functionally, catalyzes the insertion of one atom of molecular oxygen into position 2 of the phenyl ring of 3-(3-hydroxyphenyl)propionate (3-HPP) and hydroxycinnamic acid (3HCI). The sequence is that of 3-(3-hydroxy-phenyl)propionate/3-hydroxycinnamic acid hydroxylase from Burkholderia cenocepacia (strain HI2424).